Reading from the N-terminus, the 503-residue chain is Probable mitochondrial-processing peptidase subunit alpha-1, mitochondrial (503 aa).

The N-terminal 59 residues, 1 to 59, are a transit peptide targeting the mitochondrion; it reads MYRTAASRARALKGVLTRSLRPARYASSSAVAETSSSTPAYLSWLSGGSRAALTSLDMP.

It belongs to the peptidase M16 family. As to quaternary structure, heterodimer of alpha and beta subunits, forming the mitochondrial processing protease (MPP) in which subunit alpha is involved in substrate recognition and binding and subunit beta is the catalytic subunit. Component of the ubiquinol-cytochrome c oxidoreductase (cytochrome b-c1 complex, complex III, CIII), a multisubunit enzyme composed of 10 subunits. The complex is composed of 3 respiratory subunits cytochrome b (MT-CYB), cytochrome c1 (CYC1-1 or CYC1-2) and Rieske protein (UCR1-1 or UCR1-2), 2 core protein subunits MPPalpha1 (or MPPalpha2) and MPPB, and 5 low-molecular weight protein subunits QCR7-1 (or QCR7-2), UCRQ-1 (or UCRQ-2), QCR9, UCRY and probably QCR6-1 (or QCR6-2). The complex exists as an obligatory dimer and forms supercomplexes (SCs) in the inner mitochondrial membrane with NADH-ubiquinone oxidoreductase (complex I, CI), resulting in different assemblies (supercomplexes SCI(1)III(2) and SCI(2)III(4)).

The protein localises to the mitochondrion matrix. It localises to the mitochondrion inner membrane. In terms of biological role, substrate recognition and binding subunit of the essential mitochondrial processing protease (MPP), which cleaves the mitochondrial sequence off newly imported precursors proteins. Functionally, component of the ubiquinol-cytochrome c oxidoreductase, a multisubunit transmembrane complex that is part of the mitochondrial electron transport chain which drives oxidative phosphorylation. The respiratory chain contains 3 multisubunit complexes succinate dehydrogenase (complex II, CII), ubiquinol-cytochrome c oxidoreductase (cytochrome b-c1 complex, complex III, CIII) and cytochrome c oxidase (complex IV, CIV), that cooperate to transfer electrons derived from NADH and succinate to molecular oxygen, creating an electrochemical gradient over the inner membrane that drives transmembrane transport and the ATP synthase. The cytochrome b-c1 complex catalyzes electron transfer from ubiquinol to cytochrome c, linking this redox reaction to translocation of protons across the mitochondrial inner membrane, with protons being carried across the membrane as hydrogens on the quinol. In the process called Q cycle, 2 protons are consumed from the matrix, 4 protons are released into the intermembrane space and 2 electrons are passed to cytochrome c. The sequence is that of Probable mitochondrial-processing peptidase subunit alpha-1, mitochondrial (MPPalpha1) from Arabidopsis thaliana (Mouse-ear cress).